A 301-amino-acid polypeptide reads, in one-letter code: Recombination-associated protein RdgC (301 aa).

It belongs to the RdgC family.

The protein localises to the cytoplasm. It localises to the nucleoid. Its function is as follows. May be involved in recombination. The sequence is that of Recombination-associated protein RdgC from Pseudoalteromonas atlantica (strain T6c / ATCC BAA-1087).